We begin with the raw amino-acid sequence, 1011 residues long: E3 ubiquitin-protein ligase mib1 (1011 aa).

Residues 6-74 (NNRVMVEGVG…AYDLRIMDSA (69 aa)) form the MIB/HERC2 1 domain. Residues 80 to 132 (HDGTMCDTCRQQPIIGIRWKCAECTNYDLCTVCYHGDKHHLRHRFYRITTPGS) form a ZZ-type zinc finger. The Zn(2+) site is built by C85, C88, C100, C103, C109, C112, H118, and H122. The MIB/HERC2 2 domain occupies 143–221 (SKKITARGIF…MSDLKCVQDA (79 aa)). ANK repeat units follow at residues 430-460 (DLNEELVKAAANGDVAKVDDLLKRQDVDVNG), 463-492 (AGHTAMQAASQNGHVDILKLLLKHSVDVEA), 496-525 (DGDRAVHHAAFGDEGTVIEVLQRGGADLNA), 529-558 (RRQTPLHIAVNKGHLQVVKKLLDFSCHPSL), 562-591 (EGDTPLHDAISKKRDDILAVLLEAGADVTI), 595-627 (NGFNALHHAALRGNPSAMRVLLSKLPRPWIVDE), 631-661 (DGYTALHLAALNNHVEVAELLVHQGSANLDI), 665-694 (NQQTALHLAVERQHTQIVRLLVRAEAKLDI), and 698-729 (DGDTPLHEALRHHTLSQLRQLQDMQDVGKVDT). 2 RING-type zinc fingers span residues 820 to 855 (CMVCSDLKRDTLFGPCGHIATCSLCSPRVKKCLLCK) and 867 to 902 (CVVCSDKKAAVLFQPCGHMCACENCASLMKKCVQCR). Residues 936-963 (QKDKDNTNVNADVQKLQQQLQDIKEQTM) adopt a coiled-coil conformation. The segment at 964-997 (CPVCLDRLKNMIFMCGHGTCQLCGDRMSECPICR) adopts an RING-type 3 zinc-finger fold.

The protein resides in the cytoplasm. Its subcellular location is the cytoskeleton. It localises to the microtubule organizing center. It is found in the centrosome. The protein localises to the centriolar satellite. It catalyses the reaction S-ubiquitinyl-[E2 ubiquitin-conjugating enzyme]-L-cysteine + [acceptor protein]-L-lysine = [E2 ubiquitin-conjugating enzyme]-L-cysteine + N(6)-ubiquitinyl-[acceptor protein]-L-lysine.. It participates in protein modification; protein ubiquitination. E3 ubiquitin-protein ligase that mediates ubiquitination of Delta receptors, which act as ligands of Notch proteins. Positively regulates the Delta-mediated Notch signaling by ubiquitinating the intracellular domain of Delta, leading to endocytosis of Delta receptors. This Xenopus laevis (African clawed frog) protein is E3 ubiquitin-protein ligase mib1 (mib1).